The following is a 162-amino-acid chain: Ribosome-binding factor A (162 aa).

The interval 121 to 162 (DEVARVAAGASPAGDPDPYKEPRAEDADDAEVDEPSGSRQAD) is disordered. Residues 125–136 (RVAAGASPAGDP) are compositionally biased toward low complexity.

Belongs to the RbfA family. Monomer. Binds 30S ribosomal subunits, but not 50S ribosomal subunits or 70S ribosomes.

It is found in the cytoplasm. Functionally, one of several proteins that assist in the late maturation steps of the functional core of the 30S ribosomal subunit. Associates with free 30S ribosomal subunits (but not with 30S subunits that are part of 70S ribosomes or polysomes). Required for efficient processing of 16S rRNA. May interact with the 5'-terminal helix region of 16S rRNA. This is Ribosome-binding factor A from Rhodococcus jostii (strain RHA1).